Reading from the N-terminus, the 340-residue chain is MNELDSLRQEAESLKNAIRDARKAACDTSLLQAATSLEPIGRIQMRTRRTLRGHLAKIYAMHWGNDSRNLVSASQDGKLIVWDSHTTNKVHAIPLRSSWVMTCAYAPSGSYVACGGLDNMCSIYNLKTREGNVRVSRELPGHGGYLSCCRFLDDNQIVTSSGDMSCGLWDIETGLQVTSFLGHTGDVMALSLAPQCKTFVSGACDASAKLWDIREGVCKQTFPGHESDINAVTFFPNGQAFATGSDDATCRLFDIRADQELAMYSHDNIICGITSVAFSKSGRLLLAGYDDFNCNVWDTMKAERSGILAGHDNRVSCLGVTENGMAVATGSWDSFLRVWN.

Ser29 carries the post-translational modification Phosphoserine. WD repeat units lie at residues 53 to 92 (GHLAKIYAMHWGNDSRNLVSASQDGKLIVWDSHTTNKVHA), 95 to 134 (LRSSWVMTCAYAPSGSYVACGGLDNMCSIYNLKTREGNVR), 141 to 179 (GHGGYLSCCRFLDDNQIVTSSGDMSCGLWDIETGLQVTS), 182 to 221 (GHTGDVMALSLAPQCKTFVSGACDASAKLWDIREGVCKQT), 224 to 263 (GHESDINAVTFFPNGQAFATGSDDATCRLFDIRADQELAM), 268 to 307 (NIICGITSVAFSKSGRLLLAGYDDFNCNVWDTMKAERSGI), and 310 to 340 (GHDNRVSCLGVTENGMAVATGSWDSFLRVWN).

It belongs to the WD repeat G protein beta family. As to quaternary structure, g proteins are composed of 3 units, alpha, beta and gamma. As to expression, expressed in the brain neuropil and cortex, and the thoracic ganglion (at protein level). Expression detected in eye at protein level but not at mRNA level, suggesting cross reactivity of antibodies to the similar Gbeta76C protein.

Functionally, guanine nucleotide-binding proteins (G proteins) are involved as a modulator or transducer in various transmembrane signaling systems. The beta and gamma chains are required for the GTPase activity, for replacement of GDP by GTP, and for G protein-effector interaction. The protein is Guanine nucleotide-binding protein subunit beta-1 (Gbeta13F) of Drosophila melanogaster (Fruit fly).